We begin with the raw amino-acid sequence, 515 residues long: 2-isopropylmalate synthase (515 aa).

A Pyruvate carboxyltransferase domain is found at 4 to 266 (INIFDTTLRD…ETRLNLQEIK (263 aa)). The Mn(2+) site is built by Asp13, His201, His203, and Asn237. The regulatory domain stretch occupies residues 391 to 515 (QLSSLQVQYG…RAENQKVAMQ (125 aa)).

Belongs to the alpha-IPM synthase/homocitrate synthase family. LeuA type 1 subfamily. In terms of assembly, homodimer. Requires Mn(2+) as cofactor.

The protein resides in the cytoplasm. It carries out the reaction 3-methyl-2-oxobutanoate + acetyl-CoA + H2O = (2S)-2-isopropylmalate + CoA + H(+). It participates in amino-acid biosynthesis; L-leucine biosynthesis; L-leucine from 3-methyl-2-oxobutanoate: step 1/4. Catalyzes the condensation of the acetyl group of acetyl-CoA with 3-methyl-2-oxobutanoate (2-ketoisovalerate) to form 3-carboxy-3-hydroxy-4-methylpentanoate (2-isopropylmalate). This is 2-isopropylmalate synthase from Geobacillus sp. (strain WCH70).